The sequence spans 276 residues: Type II pantothenate kinase (276 aa).

8-15 (DAGGTLTK) lines the ATP pocket. E76 serves as the catalytic Proton acceptor. ATP-binding positions include T105, 127–131 (GGTIM), F143, and S230.

The protein belongs to the type II pantothenate kinase family. In terms of assembly, homodimer.

It is found in the cytoplasm. It carries out the reaction (R)-pantothenate + ATP = (R)-4'-phosphopantothenate + ADP + H(+). It participates in cofactor biosynthesis; coenzyme A biosynthesis; CoA from (R)-pantothenate: step 1/5. Catalyzes the phosphorylation of pantothenate (Pan), the first step in CoA biosynthesis. In Bacillus cereus (strain ZK / E33L), this protein is Type II pantothenate kinase.